The chain runs to 733 residues: Lanosterol synthase (733 aa).

Residue Thr2 is modified to N-acetylthreonine. A PFTB 1 repeat occupies 125–166; sequence REEMVRYLRSVQLPDGGWGLHIEDKSTVFGTALNYVALRILG. Catalysis depends on Asp456, which acts as the Proton donor. PFTB repeat units follow at residues 484–529, 561–601, and 613–654; these read LCDA…MIDY, LNQG…ACMG, and VAQA…HSTC.

Belongs to the terpene cyclase/mutase family. In terms of assembly, monomer.

It is found in the endoplasmic reticulum membrane. It catalyses the reaction (S)-2,3-epoxysqualene = lanosterol. Its pathway is terpene metabolism; lanosterol biosynthesis; lanosterol from farnesyl diphosphate: step 3/3. Key enzyme in the cholesterol biosynthesis pathway. Catalyzes the cyclization of (S)-2,3 oxidosqualene to lanosterol, a reaction that forms the sterol nucleus. Through the production of lanosterol may regulate lens protein aggregation and increase transparency. This is Lanosterol synthase from Mus musculus (Mouse).